Here is a 192-residue protein sequence, read N- to C-terminus: UPF0312 protein PFLU_5725 (192 aa).

Positions 1–23 (MLKKTLAALAIGTALLSAGQVMA) are cleaved as a signal peptide.

This sequence belongs to the UPF0312 family. Type 1 subfamily.

The protein localises to the periplasm. In Pseudomonas fluorescens (strain SBW25), this protein is UPF0312 protein PFLU_5725.